The primary structure comprises 274 residues: MRKVAIYGKGGIGKSTTTQNTVAALAEMGRKVLVVGCDPKADSTRLLLGGLAQKTVLDTLREEGEDVELDLVRKTGFGNTLCVESGGPEPGVGCAGRGIITAVNLMEQLGGYESDSPLDYVFYDVLGDVVCGGFAMPIREGKAEEVYIVCSGEMMAMYAANNICKGIRKFADAGSVKLGGLICNSRMVDNEKEMIAEFAKRLGTQMIHFVPRDNDVQRAEINKKTVIEWNPQAKQADEYRALAKAIDNNQMFVVPKPISVDELESLLVEFGVIS.

8-15 (GKGGIGKS) provides a ligand contact to ATP. Position 94 (cysteine 94) interacts with [4Fe-4S] cluster. ADP-ribosylarginine; by dinitrogenase reductase ADP-ribosyltransferase is present on arginine 97. Residue cysteine 131 coordinates [4Fe-4S] cluster.

It belongs to the NifH/BchL/ChlL family. In terms of assembly, homodimer. It depends on [4Fe-4S] cluster as a cofactor. In terms of processing, the reversible ADP-ribosylation of Arg-97 inactivates the nitrogenase reductase and regulates nitrogenase activity.

It catalyses the reaction N2 + 8 reduced [2Fe-2S]-[ferredoxin] + 16 ATP + 16 H2O = H2 + 8 oxidized [2Fe-2S]-[ferredoxin] + 2 NH4(+) + 16 ADP + 16 phosphate + 6 H(+). Functionally, the key enzymatic reactions in nitrogen fixation are catalyzed by the nitrogenase complex, which has 2 components: the iron protein and the molybdenum-iron protein. The polypeptide is Nitrogenase iron protein (Dehalococcoides mccartyi (strain ATCC BAA-2266 / KCTC 15142 / 195) (Dehalococcoides ethenogenes (strain 195))).